The sequence spans 956 residues: Matrilin-2 (956 aa).

The first 23 residues, 1–23, serve as a signal peptide directing secretion; sequence MEKMLVGCLLMLGQLFLVLPVDG. A VWFA 1 domain is found at 57 to 232; it reads DLVFIIDSSR…SQIESLTSVF (176 aa). N-linked (GlcNAc...) asparagine glycosylation occurs at Asn-221. EGF-like domains lie at 238-278, 279-319, 320-360, 361-401, 402-442, 443-483, 484-524, 525-565, 566-606, and 607-647; these read TVHM…KTCR, IQDL…KRCT, AVDY…KTCS, KIDY…KTCR, RINY…KTCS, RVDH…KTCS, RADY…KTCA, KLDS…KTCR, RKDV…KRCR, and RKNV…KHCK. Intrachain disulfides connect Cys-242-Cys-253, Cys-249-Cys-262, Cys-264-Cys-277, Cys-283-Cys-294, Cys-290-Cys-303, Cys-305-Cys-318, Cys-324-Cys-335, Cys-331-Cys-344, Cys-346-Cys-359, Cys-365-Cys-376, Cys-372-Cys-385, Cys-387-Cys-400, Cys-406-Cys-417, Cys-413-Cys-426, Cys-428-Cys-441, Cys-447-Cys-458, Cys-454-Cys-467, Cys-469-Cys-482, Cys-488-Cys-499, Cys-495-Cys-508, Cys-510-Cys-523, Cys-529-Cys-540, Cys-536-Cys-549, Cys-551-Cys-564, Cys-570-Cys-581, Cys-577-Cys-590, Cys-592-Cys-605, Cys-611-Cys-622, Cys-618-Cys-631, and Cys-633-Cys-646. In terms of domain architecture, VWFA 2 spans 655–830; that stretch reads DLVFVIDGSK…STMGEISEKL (176 aa). N-linked (GlcNAc...) asparagine glycosylation occurs at Asn-890. Residues 917–955 are a coiled coil; sequence KCENLILFQNVANEEVRKLTQRLEEMTQRMEALENRLKY.

In terms of tissue distribution, detected in a variety of organs, including calvaria, uterus, heart and brain, as well as fibroblast and osteoblast cell lines.

The protein resides in the secreted. In terms of biological role, involved in matrix assembly. The polypeptide is Matrilin-2 (Matn2) (Mus musculus (Mouse)).